A 209-amino-acid polypeptide reads, in one-letter code: Probable GTP-binding protein EngB (209 aa).

An EngB-type G domain is found at 12-203 (VSFEIIFVGR…RDRLHEMKRD (192 aa)). GTP contacts are provided by residues 20–27 (GRSNVGKS), 45–49 (GVTLR), 62–65 (DMPG), 142–145 (NKMD), and 179–181 (ISA). Mg(2+) contacts are provided by Ser-27 and Thr-47.

It belongs to the TRAFAC class TrmE-Era-EngA-EngB-Septin-like GTPase superfamily. EngB GTPase family. It depends on Mg(2+) as a cofactor.

Necessary for normal cell division and for the maintenance of normal septation. The chain is Probable GTP-binding protein EngB from Methanosarcina barkeri (strain Fusaro / DSM 804).